Reading from the N-terminus, the 188-residue chain is Probable manganese efflux pump MntP (188 aa).

A run of 6 helical transmembrane segments spans residues 3-23, 41-61, 66-86, 106-128, 143-163, and 168-188; these read YTATVLLAFGMSMDAFAASIG, LIFGAVETLTPLIGWGLGILA, LEWNHWIAFVLLIFLGGRMII, WLLVTTAIATSLDAMAVGVGLAF, ATLIMSTLGMMIGRFIGPMLG, and ILGGVVLIGIGVQILWTHFHG.

Belongs to the MntP (TC 9.B.29) family.

The protein resides in the cell inner membrane. In terms of biological role, probably functions as a manganese efflux pump. The chain is Probable manganese efflux pump MntP from Salmonella heidelberg (strain SL476).